The following is a 414-amino-acid chain: Methanesulfonate monooxygenase hydroxylase subunit alpha (414 aa).

Positions 44–163 (WVPFRHESEL…CEVKFGGFVW (120 aa)) constitute a Rieske domain. [2Fe-2S] cluster contacts are provided by C86, H88, C115, and H118. H225 contacts Fe cation.

The protein belongs to the bacterial ring-hydroxylating dioxygenase alpha subunit family. The MSA monooxygenase system consists of 4 proteins: the 2 subunits of the hydroxylase component (MsmA and MsmB), a ferredoxin (MsmC) and a ferredoxin reductase (MsmD). The hydroxylase component consists of a 3 alpha (MsmA) and 3 beta (MsmB) subunits. [2Fe-2S] cluster is required as a cofactor. It depends on Fe cation as a cofactor.

The protein localises to the cytoplasm. The catalysed reaction is methanesulfonate + NADH + O2 = sulfite + formaldehyde + NAD(+) + H2O. With respect to regulation, MSAMO is inhibited by metal chelators (such as bathophenanthroline, bathocuprione, neocuprione, alpha-alpha-dipyridil and sodium EDTA) and by sodium azide, sodium arsenate and potassium cyanide. Its function is as follows. Methanesulfonate monooxygenase (MSAMO) mediates the primary degradation of methanesulfonic acid (MSA) to produce formaldehyd and inorganic sulfite by initial hydroxylation of the carbon atom prior to spontaneous cleavage of the unstable hydroxymethanesulfonic acid. MSAMO has a restricted substrate range that includes only the short-chain aliphatic sulfonates (methane- to butanesulfonate) and excludes all larger molecules, such as arylsulfonates and aromatic sulfonates. All MSAMO components are required for enzyme activity. The protein is Methanesulfonate monooxygenase hydroxylase subunit alpha of Methylosulfonomonas methylovora.